Consider the following 239-residue polypeptide: DNA repair protein RecO (239 aa).

Belongs to the RecO family.

Its function is as follows. Involved in DNA repair and RecF pathway recombination. This Stenotrophomonas maltophilia (strain R551-3) protein is DNA repair protein RecO.